The following is a 158-amino-acid chain: Transcription elongation factor GreA (158 aa).

It belongs to the GreA/GreB family.

Necessary for efficient RNA polymerase transcription elongation past template-encoded arresting sites. The arresting sites in DNA have the property of trapping a certain fraction of elongating RNA polymerases that pass through, resulting in locked ternary complexes. Cleavage of the nascent transcript by cleavage factors such as GreA or GreB allows the resumption of elongation from the new 3'terminus. GreA releases sequences of 2 to 3 nucleotides. The polypeptide is Transcription elongation factor GreA (Pelagibacter ubique (strain HTCC1062)).